The primary structure comprises 351 residues: Dihydroorotate dehydrogenase (quinone) (351 aa).

Residues 61 to 65 (AGLDK) and Thr-85 each bind FMN. Lys-65 contacts substrate. 110–114 (NRMGF) is a binding site for substrate. Positions 139 and 172 each coordinate FMN. Asn-172 is a binding site for substrate. The active-site Nucleophile is the Ser-175. Asn-177 lines the substrate pocket. Positions 217 and 245 each coordinate FMN. Substrate is bound at residue 246–247 (NT). Residues Gly-268, Gly-297, and 318-319 (YS) contribute to the FMN site.

The protein belongs to the dihydroorotate dehydrogenase family. Type 2 subfamily. As to quaternary structure, monomer. It depends on FMN as a cofactor.

Its subcellular location is the cell membrane. The enzyme catalyses (S)-dihydroorotate + a quinone = orotate + a quinol. It functions in the pathway pyrimidine metabolism; UMP biosynthesis via de novo pathway; orotate from (S)-dihydroorotate (quinone route): step 1/1. Catalyzes the conversion of dihydroorotate to orotate with quinone as electron acceptor. The sequence is that of Dihydroorotate dehydrogenase (quinone) from Stenotrophomonas maltophilia (strain R551-3).